Reading from the N-terminus, the 200-residue chain is Cysteine dioxygenase type 1 (200 aa).

3 residues coordinate Fe cation: histidine 86, histidine 88, and histidine 140. Residues 93-157 (CFLKLLQGNL…TEPAVSLHLY (65 aa)) constitute a cross-link (3'-(S-cysteinyl)-tyrosine (Cys-Tyr)).

The protein belongs to the cysteine dioxygenase family. Monomer. Fe(2+) is required as a cofactor. It depends on Ni(2+) as a cofactor. The cofactor is Zn(2+). In terms of processing, the thioether cross-link between Cys-93 and Tyr-157 plays a structural role through stabilizing the Fe(2+) ion, and prevents the production of highly damaging free hydroxyl radicals by holding the oxygen radical via hydroxyl hydrogen. Highest expression in liver. Also expressed in kidney, lung, brain and small intestine.

The catalysed reaction is L-cysteine + O2 = 3-sulfino-L-alanine + H(+). It functions in the pathway organosulfur biosynthesis; taurine biosynthesis; hypotaurine from L-cysteine: step 1/2. Its function is as follows. Catalyzes the oxidation of cysteine to cysteine sulfinic acid with addition of molecular dioxygen. This is Cysteine dioxygenase type 1 (Cdo1) from Mus musculus (Mouse).